We begin with the raw amino-acid sequence, 115 residues long: MSNIIKQIEQEQMKQNVPSFRPGDSVEVKVWVVEGSKKRLQAFEGVVIAIRNRGLHSAFTVRKISNGEGVERVFQTHSPVIDSITVKRRGAVRQAKLYYLRERTGKAARIKERLN.

This sequence belongs to the bacterial ribosomal protein bL19 family.

Its function is as follows. This protein is located at the 30S-50S ribosomal subunit interface and may play a role in the structure and function of the aminoacyl-tRNA binding site. In Sodalis glossinidius (strain morsitans), this protein is Large ribosomal subunit protein bL19.